We begin with the raw amino-acid sequence, 32 residues long: MSDIN-like toxin proprotein 1 (32 aa).

Positions 1–10 (MSDINATRLP) are excised as a propeptide. Residues 11–18 (IFWFIYFP) constitute a cross-link (cyclopeptide (Ile-Pro)). Residues 19–32 (CVSDVDSTLTRGER) constitute a propeptide that is removed on maturation.

Belongs to the MSDIN fungal toxin family. Post-translationally, processed by the macrocyclase-peptidase enzyme POPB to yield a toxic cyclic octapeptide. POPB first removes 10 residues from the N-terminus. Conformational trapping of the remaining peptide forces the enzyme to release this intermediate rather than proceed to macrocyclization. The enzyme rebinds the remaining peptide in a different conformation and catalyzes macrocyclization of the N-terminal 8 residues. In terms of tissue distribution, expressed in basidiocarps.

Probable toxin that belongs to the MSDIN-like toxin family responsible for a large number of food poisoning cases and deaths. The protein is MSDIN-like toxin proprotein 1 of Amanita exitialis (Guangzhou destroying angel).